Here is a 365-residue protein sequence, read N- to C-terminus: MGRITSFADLIGRIKDKASQSKAALVSSNTKSKTLSFHLSVLRATTHDPSTPPGNRHLAVILSAGTGSRATASSAVESIMERLHTTGDACVALKSLIIIHHIVKHGRFILQDQLSVFPASGGRNYLKLSAFRDEKSPLMWELSSWVRWYALYLEHLLSTSRIMGFFISSTSSTIHKEEYEEMVSSLTNSDLLREIDALVGLLEEACKIPDLPFSGGKSLADKITQLVGEDYVSSINELYTRFNEFKERSNTLSFGDTIELVCALKRLESCKERLSEICHGNWKRGWIDGFWGLVLEVKGIIGNLEDNYGQIEKSIVGFGKRDKGYESARFTDRLIIGYSNPVRFSSGRFSNVDRFNFPVSGRVLC.

Residues 29-167 (NTKSKTLSFH…STSRIMGFFI (139 aa)) enclose the ENTH domain.

The protein resides in the membrane. It is found in the clathrin-coated pit. It localises to the golgi apparatus. The protein localises to the cytoplasmic vesicle. Its subcellular location is the clathrin-coated vesicle. This chain is Putative clathrin assembly protein At4g40080, found in Arabidopsis thaliana (Mouse-ear cress).